Here is a 113-residue protein sequence, read N- to C-terminus: U11-theraphotoxin-Hhn1a (113 aa).

A signal peptide spans 1–21; sequence MNTVRVAFLLVFVLAVSLGQA. Positions 22-74 are excised as a propeptide; the sequence is DKDENRMEMQEKTEQGKSYLDFAENLLLQKLEEPEAKLLEEDSEESRNSRQKR. The span at 58-69 shows a compositional bias: basic and acidic residues; that stretch reads KLLEEDSEESRN. Positions 58–83 are disordered; the sequence is KLLEEDSEESRNSRQKRCIGEGVPCD. Intrachain disulfides connect C75-C90, C82-C95, and C89-C110.

It belongs to the neurotoxin 14 (magi-1) family. 01 (HNTX-16) subfamily. As to expression, expressed by the venom gland.

The protein localises to the secreted. Functionally, probable ion channel inhibitor. This Cyriopagopus hainanus (Chinese bird spider) protein is U11-theraphotoxin-Hhn1a.